Reading from the N-terminus, the 175-residue chain is NADH-ubiquinone oxidoreductase chain 6 (175 aa).

5 helical membrane passes run 1–21 (MVTYIVFVLSIIFVISFVGVS), 25–45 (SPIYGGLGLIVGGGAGCGVVL), 47–67 (FGGSFLGLMVFLIYLGGMLVV), 88–108 (VVLGAFILGLVVESLIVIYAL), and 149–169 (YGVWLVIVTGWSLFVSVVIIM).

The protein belongs to the complex I subunit 6 family. As to quaternary structure, core subunit of respiratory chain NADH dehydrogenase (Complex I) which is composed of 45 different subunits.

Its subcellular location is the mitochondrion inner membrane. The catalysed reaction is a ubiquinone + NADH + 5 H(+)(in) = a ubiquinol + NAD(+) + 4 H(+)(out). In terms of biological role, core subunit of the mitochondrial membrane respiratory chain NADH dehydrogenase (Complex I) which catalyzes electron transfer from NADH through the respiratory chain, using ubiquinone as an electron acceptor. Essential for the catalytic activity and assembly of complex I. This chain is NADH-ubiquinone oxidoreductase chain 6 (MT-ND6), found in Balaenoptera musculus (Blue whale).